The following is a 334-amino-acid chain: Ornithine carbamoyltransferase (334 aa).

Carbamoyl phosphate-binding positions include 56-59, Q83, R107, and 134-137; these read STRT and HPTQ. L-ornithine is bound by residues N168, D232, and 236 to 237; that span reads SM. Carbamoyl phosphate-binding positions include 274 to 275 and R320; that span reads CL.

This sequence belongs to the aspartate/ornithine carbamoyltransferase superfamily. OTCase family.

The protein localises to the cytoplasm. The enzyme catalyses carbamoyl phosphate + L-ornithine = L-citrulline + phosphate + H(+). The protein operates within amino-acid biosynthesis; L-arginine biosynthesis; L-arginine from L-ornithine and carbamoyl phosphate: step 1/3. Reversibly catalyzes the transfer of the carbamoyl group from carbamoyl phosphate (CP) to the N(epsilon) atom of ornithine (ORN) to produce L-citrulline. The sequence is that of Ornithine carbamoyltransferase from Shigella sonnei (strain Ss046).